The primary structure comprises 434 residues: Serine hydroxymethyltransferase (434 aa).

(6S)-5,6,7,8-tetrahydrofolate-binding positions include L132 and 136–138; that span reads GHL. Residue K241 is modified to N6-(pyridoxal phosphate)lysine.

The protein belongs to the SHMT family. Homodimer. Requires pyridoxal 5'-phosphate as cofactor.

The protein resides in the cytoplasm. It catalyses the reaction (6R)-5,10-methylene-5,6,7,8-tetrahydrofolate + glycine + H2O = (6S)-5,6,7,8-tetrahydrofolate + L-serine. It functions in the pathway one-carbon metabolism; tetrahydrofolate interconversion. The protein operates within amino-acid biosynthesis; glycine biosynthesis; glycine from L-serine: step 1/1. Its function is as follows. Catalyzes the reversible interconversion of serine and glycine with tetrahydrofolate (THF) serving as the one-carbon carrier. This reaction serves as the major source of one-carbon groups required for the biosynthesis of purines, thymidylate, methionine, and other important biomolecules. Also exhibits THF-independent aldolase activity toward beta-hydroxyamino acids, producing glycine and aldehydes, via a retro-aldol mechanism. In Kineococcus radiotolerans (strain ATCC BAA-149 / DSM 14245 / SRS30216), this protein is Serine hydroxymethyltransferase.